The following is a 1012-amino-acid chain: Translation initiation factor IF-2, chloroplastic (1012 aa).

The span at 75–102 shows a compositional bias: low complexity; sequence GNSVSLDSNSNSSSSSKSGGDDGTGFVL. Disordered regions lie at residues 75–132, 147–294, and 319–340; these read GNSV…VEER, EKLG…KEKK, and APPKPGKAPSPGKFKDDFRKKG. Polar residues predominate over residues 152–175; sequence SKVNGDKNNGSVNKPVRNNANASP. Residues 183–194 are compositionally biased toward low complexity; it reads SAASLKSKTLKS. A compositionally biased stretch (basic and acidic residues) spans 208 to 231; that stretch reads VVKEVPKPSYNKNEEEKSQTRGGE. A compositionally biased stretch (pro residues) spans 240–257; the sequence is PQPPSKPQPLKPQQPSKP. The segment covering 277–294 has biased composition (basic and acidic residues); sequence VLRDKGAAETSVKSKEKK. The region spanning 488-661 is the tr-type G domain; it reads DRPPVITIMG…MLVAELQELK (174 aa). The interval 497 to 504 is G1; that stretch reads GHVDHGKT. 497 to 504 contacts GTP; it reads GHVDHGKT. Positions 522-526 are G2; that stretch reads GITQG. A G3 region spans residues 547–550; it reads DTPG. Residues 547–551 and 601–604 contribute to the GTP site; these read DTPGH and NKID. Residues 601-604 form a G4 region; that stretch reads NKID. Positions 637 to 639 are G5; sequence SAL.

This sequence belongs to the TRAFAC class translation factor GTPase superfamily. Classic translation factor GTPase family. IF-2 subfamily.

It is found in the plastid. It localises to the chloroplast. In terms of biological role, one of the essential components for the initiation of protein synthesis. Protects formylmethionyl-tRNA from spontaneous hydrolysis and promotes its binding to the 30S ribosomal subunits. Also involved in the hydrolysis of GTP during the formation of the 70S ribosomal complex. The protein is Translation initiation factor IF-2, chloroplastic (IF2CP) of Phaseolus vulgaris (Kidney bean).